Here is a 932-residue protein sequence, read N- to C-terminus: Lipoxygenase 2.2, chloroplastic (932 aa).

A PLAT domain is found at 79–219 (MKATVSVHMK…CSPDKRTFFP (141 aa)). The Lipoxygenase domain occupies 223-932 (SYIPSQTPKG…EMGIPNSISI (710 aa)). Over residues 270–284 (PESKRPVLGGKEHPY) the composition is skewed to basic and acidic residues. The disordered stretch occupies residues 270–311 (PESKRPVLGGKEHPYPRRCRTGRPRSKTDPSSEEESHKKGEM). Residues 285–294 (PRRCRTGRPR) show a composition bias toward basic residues. Basic and acidic residues predominate over residues 295–311 (SKTDPSSEEESHKKGEM). The Fe cation site is built by His-588, His-593, His-778, Asn-782, and Ile-932.

The protein belongs to the lipoxygenase family. Fe cation serves as cofactor.

Its subcellular location is the plastid. The protein localises to the chloroplast. It carries out the reaction (9Z,12Z)-octadecadienoate + O2 = (13S)-hydroperoxy-(9Z,11E)-octadecadienoate. It catalyses the reaction (9Z,12Z,15Z)-octadecatrienoate + O2 = (13S)-hydroperoxy-(9Z,11E,15Z)-octadecatrienoate. The protein operates within lipid metabolism; oxylipin biosynthesis. Its function is as follows. Plant lipoxygenase may be involved in a number of diverse aspects of plant physiology including growth and development, pest resistance, and senescence or responses to wounding. This enzyme exhibits linoleate 13-lipoxygenase activity. This chain is Lipoxygenase 2.2, chloroplastic (LOX2.2), found in Hordeum vulgare (Barley).